A 292-amino-acid chain; its full sequence is Cbb3-type cytochrome c oxidase subunit CcoP (292 aa).

The next 2 membrane-spanning stretches (helical) occupy residues 11 to 31 (FGLI…SSLI) and 62 to 82 (VGWI…FFFG). Cytochrome c domains follow at residues 116 to 195 (ELVD…MAEI) and 205 to 288 (QLID…QSLK). Positions 129, 132, 133, 174, 219, 222, 223, and 264 each coordinate heme c.

It belongs to the CcoP / FixP family. Component of the cbb3-type cytochrome c oxidase at least composed of CcoN, CcoO, CcoQ and CcoP. The cofactor is heme c.

It is found in the cell inner membrane. It functions in the pathway energy metabolism; oxidative phosphorylation. In terms of biological role, C-type cytochrome. Part of the cbb3-type cytochrome c oxidase complex. CcoP subunit is required for transferring electrons from donor cytochrome c via its heme groups to CcoO subunit. From there, electrons are shuttled to the catalytic binuclear center of CcoN subunit where oxygen reduction takes place. The complex also functions as a proton pump. This is Cbb3-type cytochrome c oxidase subunit CcoP from Helicobacter pylori (strain 52).